Here is a 170-residue protein sequence, read N- to C-terminus: Small ribosomal subunit protein uS5 (170 aa).

The region spanning 16–79 is the S5 DRBM domain; it reads IEDQLVAINR…EAGKKNMISV (64 aa).

It belongs to the universal ribosomal protein uS5 family. As to quaternary structure, part of the 30S ribosomal subunit. Contacts proteins S4 and S8.

Functionally, with S4 and S12 plays an important role in translational accuracy. Its function is as follows. Located at the back of the 30S subunit body where it stabilizes the conformation of the head with respect to the body. The protein is Small ribosomal subunit protein uS5 of Lactobacillus delbrueckii subsp. bulgaricus (strain ATCC 11842 / DSM 20081 / BCRC 10696 / JCM 1002 / NBRC 13953 / NCIMB 11778 / NCTC 12712 / WDCM 00102 / Lb 14).